We begin with the raw amino-acid sequence, 199 residues long: Patulin biosynthesis cluster protein F (199 aa).

The first 21 residues, 1-21 (MKSSLWVSLAVSLIGLGPAAA), serve as a signal peptide directing secretion. 2 N-linked (GlcNAc...) asparagine glycosylation sites follow: Asn129 and Asn183.

It belongs to the patF family.

Its subcellular location is the cytoplasm. The protein resides in the cytosol. The enzyme catalyses phyllostine = neopatulin. Its pathway is mycotoxin biosynthesis; patulin biosynthesis. In terms of biological role, part of the gene cluster that mediates the biosynthesis of patulin, an acetate-derived tetraketide mycotoxin produced by several fungal species that shows antimicrobial properties against several bacteria. PatF catalyzes the conversion of phyllostine into neopatulin. The pathway begins with the synthesis of 6-methylsalicylic acid by the polyketide synthase (PKS) patK via condensation of acetate and malonate units. The 6-methylsalicylic acid decarboxylase patG then catalyzes the decarboxylation of 6-methylsalicylic acid to yield m-cresol (also known as 3-methylphenol). These first reactions occur in the cytosol. The intermediate m-cresol is then transported into the endoplasmic reticulum where the cytochrome P450 monooxygenase patH converts it to m-hydroxybenzyl alcohol, which is further converted to gentisyl alcohol by the cytochrome P450 monooxygenase patI. The oxidoreductases patJ and patO further convert gentisyl alcohol to isoepoxydon in the vacuole. PatN catalyzes then the transformation of isoepoxydon into phyllostine. The cluster protein patF is responsible for the conversion from phyllostine to neopatulin whereas the alcohol dehydrogenase patD converts neopatulin to E-ascladiol. The steps between isoepoxydon and E-ascladiol occur in the cytosol, and E-ascladiol is probably secreted to the extracellular space by one of the cluster-specific transporters patC or patM. Finally, the secreted patulin synthase patE catalyzes the conversion of E-ascladiol to patulin. In Penicillium expansum (Blue mold rot fungus), this protein is Patulin biosynthesis cluster protein F.